We begin with the raw amino-acid sequence, 142 residues long: ER-derived vesicles protein ERV15 (142 aa).

Over M1–S7 the chain is Cytoplasmic. The chain crosses the membrane as a helical span at residues L8 to I28. Residues L29–A55 lie on the Extracellular side of the membrane. Residues I56–L76 traverse the membrane as a helical segment. Residues N77–K114 lie on the Cytoplasmic side of the membrane. The chain crosses the membrane as a helical span at residues L115 to E135. The Extracellular segment spans residues N136–S142.

Belongs to the cornichon family.

The protein localises to the membrane. This is ER-derived vesicles protein ERV15 (ERV15) from Saccharomyces cerevisiae (strain ATCC 204508 / S288c) (Baker's yeast).